Here is a 492-residue protein sequence, read N- to C-terminus: Bifunctional protein GlmU (492 aa).

The tract at residues 1-238 (MRDAAVVILA…AALVAGVNDR (238 aa)) is pyrophosphorylase. Residues 9–12 (LAAG), Lys23, Gln80, and 85–86 (GT) each bind UDP-N-acetyl-alpha-D-glucosamine. Residue Asp111 participates in Mg(2+) binding. UDP-N-acetyl-alpha-D-glucosamine is bound by residues Gly148, Glu163, Asn178, and Asn236. Asn236 is a binding site for Mg(2+). Residues 239–259 (VQLADLAAVLNRRIVEGHQRA) are linker. An N-acetyltransferase region spans residues 260–492 (GVTIIDPAST…EDQGPEATGE (233 aa)). Residues Arg341 and Lys359 each coordinate UDP-N-acetyl-alpha-D-glucosamine. The Proton acceptor role is filled by His371. UDP-N-acetyl-alpha-D-glucosamine is bound by residues Tyr374 and Asn385. Acetyl-CoA contacts are provided by residues Ala388, 394-395 (NY), Ser413, and Ala431. Positions 469-483 (EAAAAAGAGAGAAAE) are enriched in low complexity. The segment at 469-492 (EAAAAAGAGAGAAAEDQGPEATGE) is disordered.

The protein in the N-terminal section; belongs to the N-acetylglucosamine-1-phosphate uridyltransferase family. It in the C-terminal section; belongs to the transferase hexapeptide repeat family. Homotrimer. It depends on Mg(2+) as a cofactor.

The protein resides in the cytoplasm. It carries out the reaction alpha-D-glucosamine 1-phosphate + acetyl-CoA = N-acetyl-alpha-D-glucosamine 1-phosphate + CoA + H(+). The enzyme catalyses N-acetyl-alpha-D-glucosamine 1-phosphate + UTP + H(+) = UDP-N-acetyl-alpha-D-glucosamine + diphosphate. Its pathway is nucleotide-sugar biosynthesis; UDP-N-acetyl-alpha-D-glucosamine biosynthesis; N-acetyl-alpha-D-glucosamine 1-phosphate from alpha-D-glucosamine 6-phosphate (route II): step 2/2. It participates in nucleotide-sugar biosynthesis; UDP-N-acetyl-alpha-D-glucosamine biosynthesis; UDP-N-acetyl-alpha-D-glucosamine from N-acetyl-alpha-D-glucosamine 1-phosphate: step 1/1. The protein operates within bacterial outer membrane biogenesis; LPS lipid A biosynthesis. In terms of biological role, catalyzes the last two sequential reactions in the de novo biosynthetic pathway for UDP-N-acetylglucosamine (UDP-GlcNAc). The C-terminal domain catalyzes the transfer of acetyl group from acetyl coenzyme A to glucosamine-1-phosphate (GlcN-1-P) to produce N-acetylglucosamine-1-phosphate (GlcNAc-1-P), which is converted into UDP-GlcNAc by the transfer of uridine 5-monophosphate (from uridine 5-triphosphate), a reaction catalyzed by the N-terminal domain. The sequence is that of Bifunctional protein GlmU from Mycolicibacterium vanbaalenii (strain DSM 7251 / JCM 13017 / BCRC 16820 / KCTC 9966 / NRRL B-24157 / PYR-1) (Mycobacterium vanbaalenii).